We begin with the raw amino-acid sequence, 178 residues long: Actin-related protein 2/3 complex subunit 3-A (178 aa).

Belongs to the ARPC3 family. As to quaternary structure, component of the Arp2/3 complex composed of actr2/arp2, actr3/arp3, arpc1 (arpc1a or arpc1b), arpc2, arpc3, arpc4 and arpc5.

It localises to the cytoplasm. It is found in the cytoskeleton. The protein localises to the cell projection. Its subcellular location is the nucleus. Component of the Arp2/3 complex, a multiprotein complex that mediates actin polymerization upon stimulation by nucleation-promoting factor (NPF). The Arp2/3 complex mediates the formation of branched actin networks in the cytoplasm, providing the force for cell motility. In addition to its role in the cytoplasmic cytoskeleton, the Arp2/3 complex also promotes actin polymerization in the nucleus, thereby regulating gene transcription and repair of damaged DNA. The Arp2/3 complex promotes homologous recombination (HR) repair in response to DNA damage by promoting nuclear actin polymerization, leading to drive motility of double-strand breaks (DSBs). The chain is Actin-related protein 2/3 complex subunit 3-A (arpc3-a) from Xenopus laevis (African clawed frog).